The chain runs to 171 residues: S-ribosylhomocysteine lyase (171 aa).

Fe cation is bound by residues His-54, His-58, and Cys-128.

This sequence belongs to the LuxS family. Homodimer. Fe cation serves as cofactor.

It carries out the reaction S-(5-deoxy-D-ribos-5-yl)-L-homocysteine = (S)-4,5-dihydroxypentane-2,3-dione + L-homocysteine. Its function is as follows. Involved in the synthesis of autoinducer 2 (AI-2) which is secreted by bacteria and is used to communicate both the cell density and the metabolic potential of the environment. The regulation of gene expression in response to changes in cell density is called quorum sensing. Catalyzes the transformation of S-ribosylhomocysteine (RHC) to homocysteine (HC) and 4,5-dihydroxy-2,3-pentadione (DPD). The sequence is that of S-ribosylhomocysteine lyase from Photorhabdus laumondii subsp. laumondii (strain DSM 15139 / CIP 105565 / TT01) (Photorhabdus luminescens subsp. laumondii).